The following is a 601-amino-acid chain: Elongation factor 4 (601 aa).

One can recognise a tr-type G domain in the interval 6–188 (SRTRNFSIIA…DIVKNVPPPK (183 aa)). GTP-binding positions include 18–23 (DHGKST) and 135–138 (NKID).

This sequence belongs to the TRAFAC class translation factor GTPase superfamily. Classic translation factor GTPase family. LepA subfamily.

The protein resides in the cell membrane. The enzyme catalyses GTP + H2O = GDP + phosphate + H(+). Functionally, required for accurate and efficient protein synthesis under certain stress conditions. May act as a fidelity factor of the translation reaction, by catalyzing a one-codon backward translocation of tRNAs on improperly translocated ribosomes. Back-translocation proceeds from a post-translocation (POST) complex to a pre-translocation (PRE) complex, thus giving elongation factor G a second chance to translocate the tRNAs correctly. Binds to ribosomes in a GTP-dependent manner. The chain is Elongation factor 4 from Clostridioides difficile (strain 630) (Peptoclostridium difficile).